Here is a 238-residue protein sequence, read N- to C-terminus: ATP-dependent Clp protease proteolytic subunit 4 (238 aa).

The Nucleophile role is filled by Ser113. His138 is an active-site residue.

Belongs to the peptidase S14 family. As to quaternary structure, fourteen ClpP subunits assemble into 2 heptameric rings which stack back to back to give a disk-like structure with a central cavity, resembling the structure of eukaryotic proteasomes.

It is found in the cytoplasm. It carries out the reaction Hydrolysis of proteins to small peptides in the presence of ATP and magnesium. alpha-casein is the usual test substrate. In the absence of ATP, only oligopeptides shorter than five residues are hydrolyzed (such as succinyl-Leu-Tyr-|-NHMec, and Leu-Tyr-Leu-|-Tyr-Trp, in which cleavage of the -Tyr-|-Leu- and -Tyr-|-Trp bonds also occurs).. Functionally, cleaves peptides in various proteins in a process that requires ATP hydrolysis. Has a chymotrypsin-like activity. Plays a major role in the degradation of misfolded proteins. In Frankia casuarinae (strain DSM 45818 / CECT 9043 / HFP020203 / CcI3), this protein is ATP-dependent Clp protease proteolytic subunit 4.